Here is a 277-residue protein sequence, read N- to C-terminus: Large ribosomal subunit protein uL2 (277 aa).

The tract at residues 216–277 (RRPHNRGVAM…IIRRRKVGKG (62 aa)) is disordered.

The protein belongs to the universal ribosomal protein uL2 family. In terms of assembly, part of the 50S ribosomal subunit. Forms a bridge to the 30S subunit in the 70S ribosome.

Its function is as follows. One of the primary rRNA binding proteins. Required for association of the 30S and 50S subunits to form the 70S ribosome, for tRNA binding and peptide bond formation. It has been suggested to have peptidyltransferase activity; this is somewhat controversial. Makes several contacts with the 16S rRNA in the 70S ribosome. The polypeptide is Large ribosomal subunit protein uL2 (Acidiphilium cryptum (strain JF-5)).